The following is a 235-amino-acid chain: Motile sperm domain-containing protein 3 (235 aa).

2 disordered regions span residues 1 to 30 (MRRGAPQDQELVGPGAPGRGSRGAPPPSGP) and 143 to 170 (ELQGQSDPTPHPEPHSWTASSTAQPFPE). An MSP domain is found at 33–145 (PVLVFPPDLV…RAPAYPLELQ (113 aa)). 2 helical membrane-spanning segments follow: residues 180-200 (SFLLFLLMGTVSVAFLLLPLQ) and 213-233 (VSLGQKLVAAYVLGLLTMVFL).

It localises to the membrane. This chain is Motile sperm domain-containing protein 3 (MOSPD3), found in Bos taurus (Bovine).